Consider the following 411-residue polypeptide: Methylthioribose-1-phosphate isomerase (411 aa).

Ser-2 is subject to N-acetylserine. Asp-280 (proton donor) is an active-site residue. Ser-351 carries the phosphoserine modification.

The protein belongs to the eIF-2B alpha/beta/delta subunits family. MtnA subfamily. In terms of assembly, homodimer.

It localises to the cytoplasm. It is found in the nucleus. The enzyme catalyses 5-(methylsulfanyl)-alpha-D-ribose 1-phosphate = 5-(methylsulfanyl)-D-ribulose 1-phosphate. Its pathway is amino-acid biosynthesis; L-methionine biosynthesis via salvage pathway; L-methionine from S-methyl-5-thio-alpha-D-ribose 1-phosphate: step 1/6. Catalyzes the interconversion of methylthioribose-1-phosphate (MTR-1-P) into methylthioribulose-1-phosphate (MTRu-1-P). This Saccharomyces cerevisiae (strain RM11-1a) (Baker's yeast) protein is Methylthioribose-1-phosphate isomerase.